Reading from the N-terminus, the 889-residue chain is DNA gyrase subunit A (889 aa).

Positions 35–501 (LPDVRDGLKP…GFEDLEDEDL (467 aa)) constitute a Topo IIA-type catalytic domain. The O-(5'-phospho-DNA)-tyrosine intermediate role is filled by Tyr123. The GyrA-box signature appears at 528–534 (QNRGGRG). Residues 811–889 (KEDAEDETNE…IQQSSDEDEE (79 aa)) are disordered. Residues 813–823 (DAEDETNEDEQ) show a composition bias toward acidic residues. Basic and acidic residues predominate over residues 863-875 (DGRIEVRQDFMDR). The span at 876-889 (VEEDIQQSSDEDEE) shows a compositional bias: acidic residues.

It belongs to the type II topoisomerase GyrA/ParC subunit family. Heterotetramer, composed of two GyrA and two GyrB chains. In the heterotetramer, GyrA contains the active site tyrosine that forms a transient covalent intermediate with DNA, while GyrB binds cofactors and catalyzes ATP hydrolysis.

It localises to the cytoplasm. It carries out the reaction ATP-dependent breakage, passage and rejoining of double-stranded DNA.. Functionally, a type II topoisomerase that negatively supercoils closed circular double-stranded (ds) DNA in an ATP-dependent manner to modulate DNA topology and maintain chromosomes in an underwound state. Negative supercoiling favors strand separation, and DNA replication, transcription, recombination and repair, all of which involve strand separation. Also able to catalyze the interconversion of other topological isomers of dsDNA rings, including catenanes and knotted rings. Type II topoisomerases break and join 2 DNA strands simultaneously in an ATP-dependent manner. This chain is DNA gyrase subunit A, found in Staphylococcus aureus (strain Mu50 / ATCC 700699).